Consider the following 498-residue polypeptide: Archaemetzincin-1 (498 aa).

Position 261 (His261) interacts with Zn(2+). Catalysis depends on Glu262, which acts as the Proton acceptor. Residues His265, Cys272, Cys277, Cys296, and Cys299 each coordinate Zn(2+). Residues Gln332–Pro381 form a disordered region.

This sequence belongs to the peptidase M54 family. It depends on Zn(2+) as a cofactor.

Probable zinc metalloprotease. The chain is Archaemetzincin-1 (AMZ1) from Homo sapiens (Human).